The following is a 120-amino-acid chain: Dihydroneopterin aldolase (120 aa).

Glu20 and Met114 together coordinate substrate.

It belongs to the archaeal dihydroneopterin aldolase family. In terms of assembly, homotetramer.

The enzyme catalyses 7,8-dihydroneopterin = 6-hydroxymethyl-7,8-dihydropterin + glycolaldehyde. Functionally, catalyzes the conversion of 7,8-dihydroneopterin (H2Neo) to 6-hydroxymethyl-7,8-dihydropterin (6-HMD). This chain is Dihydroneopterin aldolase, found in Picrophilus torridus (strain ATCC 700027 / DSM 9790 / JCM 10055 / NBRC 100828 / KAW 2/3).